Reading from the N-terminus, the 182-residue chain is Ribosome-recycling factor (182 aa).

It belongs to the RRF family.

The protein resides in the cytoplasm. Its function is as follows. Responsible for the release of ribosomes from messenger RNA at the termination of protein biosynthesis. May increase the efficiency of translation by recycling ribosomes from one round of translation to another. The chain is Ribosome-recycling factor from Synechococcus sp. (strain JA-2-3B'a(2-13)) (Cyanobacteria bacterium Yellowstone B-Prime).